Consider the following 309-residue polypeptide: SUR7 family protein FMP45 (309 aa).

Over 1–5 (MIFKR) the chain is Cytoplasmic. A helical membrane pass occupies residues 6-26 (FVNLLVFLFLLGAGLLTFFLI). Residues 27 to 116 (LSGGRESGTL…YYLSRVGWAM (90 aa)) are Extracellular-facing. N-linked (GlcNAc...) asparagine glycosylation occurs at asparagine 73. A helical membrane pass occupies residues 117-137 (LLISLFFIVLALVPGFLATFL). Residues 138 to 140 (PFK) lie on the Cytoplasmic side of the membrane. The helical transmembrane segment at 141–161 (AVPVLYCVLSWLAFFFIILAA) threads the bilayer. Residues 162 to 188 (CLYTGCYVKARKTFRNSGRSARLGPKN) lie on the Extracellular side of the membrane. Residues 189 to 209 (FAFIWTSVFLMLVNAIWSTIF) traverse the membrane as a helical segment. Topologically, residues 210-309 (SATHKAHSTY…GLAGPVTVRD (100 aa)) are cytoplasmic. Phosphoserine is present on residues serine 230 and serine 232. Threonine 235 carries the phosphothreonine modification. A disordered region spans residues 253–309 (GPITAAPVVGQPQPTTTTTPAGNGKFFQKLKTRKQVPSAELEPAGDGGLAGPVTVRD). The span at 258-274 (APVVGQPQPTTTTTPAG) shows a compositional bias: low complexity.

It belongs to the SUR7 family.

The protein resides in the cell membrane. Involved in sporulation and affects the sphingolipid composition of the plasma membrane. The protein is SUR7 family protein FMP45 (FMP45) of Saccharomyces cerevisiae (strain ATCC 204508 / S288c) (Baker's yeast).